Consider the following 413-residue polypeptide: uncharacterized protein (413 aa).

The next 12 helical transmembrane spans lie at 42–62, 75–95, 109–129, 133–153, 157–179, 191–211, 238–258, 265–285, 304–324, 326–346, 362–382, and 383–403; these read FLGG…LPVF, LSLS…GPLS, LIAA…VIVF, LTGL…VEEV, SVSF…GRIL, IAFI…LYFL, PTLL…ITIF, LMLS…IIYL, SSIL…TQYN, IFII…SHSI, ATSL…TFGG, and FFWF…ILIF.

The protein belongs to the major facilitator superfamily.

The protein resides in the cell membrane. This is an uncharacterized protein from Buchnera aphidicola subsp. Schizaphis graminum (strain Sg).